We begin with the raw amino-acid sequence, 261 residues long: Thiamine thiazole synthase (261 aa).

NAD(+) is bound by residues S33, 52-53, G60, V124, and 152-154; these read ER and HVD. D154 and H169 together coordinate Fe cation. M219 contacts NAD(+). R229 lines the glycine pocket.

Belongs to the THI4 family. In terms of assembly, homooctamer; tetramer of dimers. Fe(2+) is required as a cofactor.

It catalyses the reaction hydrogen sulfide + glycine + NAD(+) = ADP-5-ethyl-4-methylthiazole-2-carboxylate + nicotinamide + 3 H2O + H(+). Its pathway is cofactor biosynthesis; thiamine diphosphate biosynthesis. Functionally, involved in the biosynthesis of the thiazole moiety of thiamine. Catalyzes the conversion of NAD and glycine to adenosine diphosphate 5-(2-hydroxyethyl)-4-methylthiazole-2-carboxylate (ADT), an adenylated thiazole intermediate, using free sulfide as a source of sulfur. This is Thiamine thiazole synthase from Pyrobaculum arsenaticum (strain DSM 13514 / JCM 11321 / PZ6).